The sequence spans 447 residues: Chordin-like protein 1 (447 aa).

The first 22 residues, 1-22, serve as a signal peptide directing secretion; the sequence is MEGIKYIASLVFFFVFLEASKT. VWFC domains lie at 30–95 and 108–174; these read TYCM…PRCP and KSCE…RVCR. Asn-113 carries N-linked (GlcNAc...) asparagine glycosylation. The short motif at 174–176 is the Cell attachment site element; sequence RGD. The disordered stretch occupies residues 199–219; sequence HSYLRSPYDPPPSRQAGGLPR. One can recognise a VWFC 3 domain in the interval 253–318; it reads QVCVSNGKTY…LDGKCCKVCP (66 aa). The N-linked (GlcNAc...) asparagine glycan is linked to Asn-286.

Its subcellular location is the secreted. In terms of biological role, seems to antagonize the function of BMP4 by binding to it and preventing its interaction with receptors. Alters the fate commitment of neural stem cells from gliogenesis to neurogenesis. Contributes to neuronal differentiation of neural stem cells in the brain by preventing the adoption of a glial fate. May play a crucial role in dorsoventral axis formation. May play a role in embryonic bone formation. Plays a role during anterior segment eye development. The polypeptide is Chordin-like protein 1 (Chrdl1) (Rattus norvegicus (Rat)).